The primary structure comprises 667 residues: UvrABC system protein B (667 aa).

The Helicase ATP-binding domain occupies 28 to 185 (NNFKQGLKEQ…NKLIELKYQR (158 aa)). 41 to 48 (GATGTGKT) is an ATP binding site. Residues 94–117 (YYDYYQPEAYVASSDTYIEKDSKI) carry the Beta-hairpin motif. In terms of domain architecture, Helicase C-terminal spans 432–594 (QMDDLYFEIK…VTPTALNKTI (163 aa)). Positions 629-664 (NKEIKRLQKTMKEAAKALDFEKAATLRDLILDLEKK) constitute a UVR domain.

This sequence belongs to the UvrB family. Forms a heterotetramer with UvrA during the search for lesions. Interacts with UvrC in an incision complex.

Its subcellular location is the cytoplasm. Functionally, the UvrABC repair system catalyzes the recognition and processing of DNA lesions. A damage recognition complex composed of 2 UvrA and 2 UvrB subunits scans DNA for abnormalities. Upon binding of the UvrA(2)B(2) complex to a putative damaged site, the DNA wraps around one UvrB monomer. DNA wrap is dependent on ATP binding by UvrB and probably causes local melting of the DNA helix, facilitating insertion of UvrB beta-hairpin between the DNA strands. Then UvrB probes one DNA strand for the presence of a lesion. If a lesion is found the UvrA subunits dissociate and the UvrB-DNA preincision complex is formed. This complex is subsequently bound by UvrC and the second UvrB is released. If no lesion is found, the DNA wraps around the other UvrB subunit that will check the other stand for damage. This is UvrABC system protein B from Aster yellows witches'-broom phytoplasma (strain AYWB).